Here is a 970-residue protein sequence, read N- to C-terminus: Longitudinals lacking protein, isoforms F/I/K/T (970 aa).

Residues 32-97 (VDCTLAAEGK…MYRGEVNISQ (66 aa)) enclose the BTB domain. Disordered stretches follow at residues 115-200 (LSDN…SSVL), 228-340 (SSGP…ASAS), 447-468 (DAQQ…EGAQ), and 790-843 (QTVH…LQDD). Composition is skewed to low complexity over residues 162–175 (SGDV…SSSP), 228–251 (SSGP…LTST), 263–293 (TSST…QTTS), and 329–340 (NSATGPNPASAS). 2 stretches are compositionally biased toward polar residues: residues 447–456 (DAQQRDPQAS) and 808–818 (QLQTHHIQTVV). The span at 819–828 (QSSSGQQQHD) shows a compositional bias: low complexity. The C2H2-type 1; degenerate zinc-finger motif lies at 903–925 (YVCRHCGKKYRWKSTLRRHENVE). A C2H2-type 2 zinc finger spans residues 933–955 (HPCPYCSYKAKQRGNLGVHVRKH).

By stage 11, isoform F is expressed throughout the mesoderm whereas isoform T, and at low levels isoform I, is expressed throughout the ectoderm. Isoform K is expressed in both mesoderm and ectoderm. Expression becomes restricted during later stages; starting from stage 14 to 15, isoform F is expressed in the gut. Isoform I is expressed in the CNS. Isoform I and isoform F show expression in the epithelium starting at stage 14, though for isoform I the CNS expression remains predominant. Expression is also seen in specific types of cells in the embryo; isoform K is expressed in the ventral furrow at stage 5 and in a dynamic pattern in the ventral neurogenic region starting at stage 7. Isoform T is expressed around the tracheal pits at stage 11. Isoform F shows transient enrichment in a dorsal cell layer in the CNS at stages 13 and 14.

It is found in the nucleus. Its function is as follows. Putative transcription factor required for axon growth and guidance in the central and peripheral nervous systems. Repels CNS axons away from the midline by promoting the expression of the midline repellent sli and its receptor robo. The protein is Longitudinals lacking protein, isoforms F/I/K/T of Drosophila melanogaster (Fruit fly).